The sequence spans 62 residues: Sauvatide (62 aa).

The first 24 residues, 1 to 24 (MDILKKSLFLILFLGLVSISFCDG), serve as a signal peptide directing secretion. The propeptide occupies 25 to 46 (EKRQDDDEANESEEKKEIHEVE). Lysine amide is present on Lys58.

Expressed by the skin glands.

Its subcellular location is the secreted. In terms of biological role, induces contraction of smooth muscle in isolated rat urinary bladder with an EC(50) value of 2.2nM. This is Sauvatide from Phyllomedusa sauvagei (Sauvage's leaf frog).